A 419-amino-acid polypeptide reads, in one-letter code: Enolase (419 aa).

Position 160 (glutamine 160) interacts with (2R)-2-phosphoglycerate. Glutamate 204 functions as the Proton donor in the catalytic mechanism. Residues aspartate 240, glutamate 283, and aspartate 309 each coordinate Mg(2+). (2R)-2-phosphoglycerate is bound by residues lysine 334, arginine 363, serine 364, and lysine 385. Lysine 334 functions as the Proton acceptor in the catalytic mechanism.

It belongs to the enolase family. Requires Mg(2+) as cofactor.

The protein localises to the cytoplasm. The protein resides in the secreted. It localises to the cell surface. It carries out the reaction (2R)-2-phosphoglycerate = phosphoenolpyruvate + H2O. The protein operates within carbohydrate degradation; glycolysis; pyruvate from D-glyceraldehyde 3-phosphate: step 4/5. Functionally, catalyzes the reversible conversion of 2-phosphoglycerate (2-PG) into phosphoenolpyruvate (PEP). It is essential for the degradation of carbohydrates via glycolysis. This is Enolase from Pyrobaculum aerophilum (strain ATCC 51768 / DSM 7523 / JCM 9630 / CIP 104966 / NBRC 100827 / IM2).